A 443-amino-acid chain; its full sequence is Thymidine phosphorylase (443 aa).

This sequence belongs to the thymidine/pyrimidine-nucleoside phosphorylase family. As to quaternary structure, homodimer.

The enzyme catalyses thymidine + phosphate = 2-deoxy-alpha-D-ribose 1-phosphate + thymine. It functions in the pathway pyrimidine metabolism; dTMP biosynthesis via salvage pathway; dTMP from thymine: step 1/2. Functionally, the enzymes which catalyze the reversible phosphorolysis of pyrimidine nucleosides are involved in the degradation of these compounds and in their utilization as carbon and energy sources, or in the rescue of pyrimidine bases for nucleotide synthesis. This is Thymidine phosphorylase from Aliivibrio salmonicida (strain LFI1238) (Vibrio salmonicida (strain LFI1238)).